The primary structure comprises 247 residues: Thioredoxin reductase-like selenoprotein T homolog selt-1.1 (247 aa).

A signal peptide spans 1–26; it reads MSRFGVFIIGVLFFMSVCDVLRTVSA. Cys-92 and Cys-95 form a disulfide bridge.

The protein belongs to the SelWTH family. SELT subfamily. As to expression, broadly expressed in neurons of nervous system including ADL, ASH, ASI, ASJ, ASK and AWB amphid sensilla neurons, in epithelial cells including hypodermal, arcade, pharyngeal, vulval and rectal cells, and in somatic muscle cells of the head, neck and body wall, and non-striated pharyngeal muscles.

It localises to the endoplasmic reticulum. The catalysed reaction is [thioredoxin]-dithiol + NADP(+) = [thioredoxin]-disulfide + NADPH + H(+). Probably has thioredoxin reductase-like oxidoreductase activity. Plays a role in regulating the oxidative stress response, and odorant and pathogenic bacteria avoidance behavior. This Caenorhabditis elegans protein is Thioredoxin reductase-like selenoprotein T homolog selt-1.1.